The sequence spans 447 residues: N-succinylarginine dihydrolase (447 aa).

Substrate contacts are provided by residues 19–28 (AGLSFGNEAS), asparagine 110, and 137–138 (HR). The active site involves glutamate 174. Substrate is bound at residue arginine 212. Residue histidine 248 is part of the active site. Substrate-binding residues include aspartate 250 and asparagine 359. The Nucleophile role is filled by cysteine 365.

The protein belongs to the succinylarginine dihydrolase family. As to quaternary structure, homodimer.

The enzyme catalyses N(2)-succinyl-L-arginine + 2 H2O + 2 H(+) = N(2)-succinyl-L-ornithine + 2 NH4(+) + CO2. Its pathway is amino-acid degradation; L-arginine degradation via AST pathway; L-glutamate and succinate from L-arginine: step 2/5. In terms of biological role, catalyzes the hydrolysis of N(2)-succinylarginine into N(2)-succinylornithine, ammonia and CO(2). This Salmonella arizonae (strain ATCC BAA-731 / CDC346-86 / RSK2980) protein is N-succinylarginine dihydrolase.